A 122-amino-acid polypeptide reads, in one-letter code: Large ribosomal subunit protein uL14 (122 aa).

Belongs to the universal ribosomal protein uL14 family. As to quaternary structure, part of the 50S ribosomal subunit. Forms a cluster with proteins L3 and L19. In the 70S ribosome, L14 and L19 interact and together make contacts with the 16S rRNA in bridges B5 and B8.

Functionally, binds to 23S rRNA. Forms part of two intersubunit bridges in the 70S ribosome. The polypeptide is Large ribosomal subunit protein uL14 (Nitratiruptor sp. (strain SB155-2)).